Consider the following 202-residue polypeptide: MDAVTGIILAGGESRRFGGGNKAFRMLDGRTMIDRVHDTVKSVCDDMVIVANTPLDYLGWNAVLATDLFDFRGSLVGIHAGLMSAGHEYAFISACDTPFLKQAVIKTIIGGIEDHIDVVVPEKKEGMEPLCAVYSRRCLEVIERHLHQGRMVIKAVYNKLRVRTISEKRLRAVDPDLVSFWNINTKEELEKAEAAIKAGRIS.

GTP contacts are provided by residues 9–11, lysine 22, aspartate 70, and aspartate 96; that span reads LAG. Aspartate 96 is a binding site for Mg(2+).

This sequence belongs to the MobA family. As to quaternary structure, monomer. Mg(2+) is required as a cofactor.

It localises to the cytoplasm. The enzyme catalyses Mo-molybdopterin + GTP + H(+) = Mo-molybdopterin guanine dinucleotide + diphosphate. Its function is as follows. Transfers a GMP moiety from GTP to Mo-molybdopterin (Mo-MPT) cofactor (Moco or molybdenum cofactor) to form Mo-molybdopterin guanine dinucleotide (Mo-MGD) cofactor. The sequence is that of Molybdenum cofactor guanylyltransferase from Desulfosudis oleivorans (strain DSM 6200 / JCM 39069 / Hxd3) (Desulfococcus oleovorans).